The sequence spans 280 residues: Hydroxyethylthiazole kinase (280 aa).

A substrate-binding site is contributed by M58. R129 provides a ligand contact to ATP. Substrate is bound at residue A206.

This sequence belongs to the Thz kinase family. The cofactor is Mg(2+).

The enzyme catalyses 5-(2-hydroxyethyl)-4-methylthiazole + ATP = 4-methyl-5-(2-phosphooxyethyl)-thiazole + ADP + H(+). It participates in cofactor biosynthesis; thiamine diphosphate biosynthesis; 4-methyl-5-(2-phosphoethyl)-thiazole from 5-(2-hydroxyethyl)-4-methylthiazole: step 1/1. Its function is as follows. Thiazole kinase involved in thiamine salvage pathway. The chain is Hydroxyethylthiazole kinase (THIM) from Zea mays (Maize).